The sequence spans 730 residues: PWWP domain-containing protein 2A (730 aa).

A compositionally biased stretch (low complexity) spans 1 to 15; it reads MAAVAAEAAATAASP. The disordered stretch occupies residues 1–134; sequence MAAVAAEAAA…PPAGGDSAVS (134 aa). Pro residues predominate over residues 66–77; sequence PLPPPPPPPPPG. A phosphoserine mark is found at Ser-82 and Ser-99. Residues 91 to 108 are compositionally biased toward pro residues; it reads PEPAAVPVSPPEQPPAAP. The interval 128–346 is interaction with HDAC1 and MTA1; sequence GGDSAVSHLI…KLKTDHKVDG (219 aa). A Glycyl lysine isopeptide (Lys-Gly) (interchain with G-Cter in SUMO2) cross-link involves residue Lys-188. Disordered regions lie at residues 257-276, 311-355, and 409-531; these read YNQS…KRKM, IRKG…SQRR, and KEKA…LGKK. Residues 267–276 show a composition bias toward basic residues; the sequence is RKIKRPKRKM. Composition is skewed to basic and acidic residues over residues 311–329 and 341–354; these read IRKG…RRND and DHKV…ESQR. Residues 396-547 are interaction with the H2A.Z/H2AZ1; the sequence is MDHAKAREVL…SVYLTLNQET (152 aa). Residues 488-501 are compositionally biased toward low complexity; sequence SAGEAPSEKPSPSE. Over residues 512–527 the composition is skewed to basic and acidic residues; that stretch reads DTSRVRVPGEQEELRM. The PWWP domain occupies 630 to 690; that stretch reads VGDIVWAKIY…LSQLSPFLEN (61 aa).

In terms of assembly, component of a MTA1-specific subcomplex of the NuRD complex (M1HR), which is composed of PWWP2A, MTA1/2, HDAC1/2, and RBBP4/7 but does not contain CHD4 and MBD3. Interacts with MTA1; the interaction mediates the association of PWWP2A with the M1HR complex. Interacts with H2A.Z/H2AZ1. Interacts (via PWWP domain) with histone H3 trimethylated at 'Lys-36' (H3K36me3). Does not interact with CHD4 and MBD3.

It localises to the nucleus. Chromatin-binding protein that acts as an adapter between distinct nucleosome components (H3K36me3 or H2A.Z) and chromatin-modifying complexes, contributing to the regulation of the levels of histone acetylation at actively transcribed genes. Competes with CHD4 and MBD3 for interaction with MTA1 to form a NuRD subcomplex, preventing the formation of full NuRD complex (containing CHD4 and MBD3), leading to recruitment of HDACs to gene promoters resulting in turn in the deacetylation of nearby H3K27 and H2A.Z. Plays a role in facilitating transcriptional elongation and repression of spurious transcription initiation through regulation of histone acetylation. Essential for proper mitosis progression. This is PWWP domain-containing protein 2A (Pwwp2a) from Mus musculus (Mouse).